A 182-amino-acid chain; its full sequence is Dynactin subunit 5 (182 aa).

Residue Met-1 is modified to N-acetylmethionine.

This sequence belongs to the dynactin subunits 5/6 family. Dynactin subunit 5 subfamily. Subunit of dynactin, a multiprotein complex part of a tripartite complex with dynein and a adapter, such as BICDL1, BICD2 or HOOK3. The dynactin complex is built around ACTR1A/ACTB filament and consists of an actin-related filament composed of a shoulder domain, a pointed end and a barbed end. Its length is defined by its flexible shoulder domain. The soulder is composed of 2 DCTN1 subunits, 4 DCTN2 and 2 DCTN3. The 4 DCNT2 (via N-terminus) bind the ACTR1A filament and act as molecular rulers to determine the length. The pointed end is important for binding dynein-dynactin cargo adapters. Consists of 4 subunits: ACTR10, DCNT4, DCTN5 and DCTN6. Within the complex DCTN6 forms a heterodimer with DCTN5. The barbed end is composed of a CAPZA1:CAPZB heterodimers, which binds ACTR1A/ACTB filament and dynactin and stabilizes dynactin. Interacts with N4BP2L1.

The protein localises to the cytoplasm. The protein resides in the cytoskeleton. It is found in the chromosome. Its subcellular location is the centromere. It localises to the kinetochore. Functionally, part of the dynactin complex that activates the molecular motor dynein for ultra-processive transport along microtubules. The sequence is that of Dynactin subunit 5 from Homo sapiens (Human).